The chain runs to 718 residues: Sodium/myo-inositol cotransporter (718 aa).

The Extracellular segment spans residues 1 to 9 (MRAVLETAD). A helical membrane pass occupies residues 10-29 (IAIVALYFILVMCIGFFAMW). Residues 30 to 38 (KSNRSTVSG) lie on the Cytoplasmic side of the membrane. A helical membrane pass occupies residues 39–57 (YFLAGRSMTWVAIGASLFV). The Extracellular portion of the chain corresponds to 58–86 (SNIGSEHFIGLAGSGAASGFAVGAWEFNA). The helical transmembrane segment at 87–110 (LLLLQLLGWVFIPIYIRSGVYTMP) threads the bilayer. The Cytoplasmic segment spans residues 111-123 (EYLSKRFGGHRIQ). The helical transmembrane segment at 124 to 144 (VYFAALSLILYIFTKLSVDLY) threads the bilayer. Residues 145 to 157 (SGALFIQESMGWN) are Extracellular-facing. The chain crosses the membrane as a helical span at residues 158-183 (LYVSVILLIGMTALLTVTGGLVAVIY). Residues 184–186 (TDT) are Cytoplasmic-facing. The helical transmembrane segment at 187 to 205 (LQALLMIVGALTLMVISMM) threads the bilayer. The Extracellular segment spans residues 206–303 (EIGGFEEVKR…HAKGSTLMAG (98 aa)). N232 carries N-linked (GlcNAc...) asparagine glycosylation. Residues 304–324 (FLKLLPMFIIVVPGMISRILF) form a helical membrane-spanning segment. Residues 325–353 (ADDIACINPEHCMQVCGSRAGCSNIAYPR) lie on the Cytoplasmic side of the membrane. The chain crosses the membrane as a helical span at residues 354 to 376 (LVMKLVPVGLRGLMMAVMIAALM). Residues 377–406 (SDLDSIFNSASTIFTLDVYKLIRKSASSRE) are Extracellular-facing. The chain crosses the membrane as a helical span at residues 407–430 (LMIVGRIFVAFMVVISIAWVPIIV). Topologically, residues 431–443 (EMQGGQMYLYIQE) are cytoplasmic. The chain crosses the membrane as a helical span at residues 444–462 (VADYLTPPVAALFLLAIFW). The Extracellular segment spans residues 463-510 (KRCNEQGAFYGGMAGFILVVVRLTLAFAYRAPECDQPDNRPVFIKDIH). The chain crosses the membrane as a helical span at residues 511–532 (YMYVATALFWITGLITVIVSLL). At 533 to 695 (TPPPTKEQIR…QMLEEPPQVK (163 aa)) the chain is on the cytoplasmic side. Phosphoserine occurs at positions 594 and 632. Residues 696–716 (VILNIGLFGVCSLGIFMFVYF) traverse the membrane as a helical segment. The Extracellular segment spans residues 717–718 (SL).

It belongs to the sodium:solute symporter (SSF) (TC 2.A.21) family. In terms of assembly, interacts with KCNQ2 (via the pore module). Interacts with KCNQ1; this interaction is direct. Forms coregulatory complexes with ion channels KCNQ2-KCNQ3 and KCNQ1-KCNE2.

It localises to the apical cell membrane. It is found in the basolateral cell membrane. Functionally, electrogenic Na(+)-coupled sugar symporter that actively transports myo-inositol and its stereoisomer scyllo-inositol across the plasma membrane, with a Na(+) to sugar coupling ratio of 2:1. Maintains myo-inositol concentration gradient that defines cell volume and fluid balance during osmotic stress, in particular in the fetoplacental unit and central nervous system. Forms coregulatory complexes with voltage-gated K(+) ion channels, allosterically altering ion selectivity, voltage dependence and gating kinetics of the channel. In turn, K(+) efflux through the channel forms a local electrical gradient that modulates electrogenic Na(+)-coupled myo-inositol influx through the transporter. Associates with KCNQ1-KCNE2 channel in the apical membrane of choroid plexus epithelium and regulates the myo-inositol gradient between blood and cerebrospinal fluid with an impact on neuron excitability. Associates with KCNQ2-KCNQ3 channel altering ion selectivity, increasing Na(+) and Cs(+) permeation relative to K(+) permeation. Provides myo-inositol precursor for biosynthesis of phosphoinositides such as PI(4,5)P2, thus indirectly affecting the activity of phosphoinositide-dependent ion channels and Ca(2+) signaling upon osmotic stress. The chain is Sodium/myo-inositol cotransporter (SLC5A3) from Bos taurus (Bovine).